Here is a 384-residue protein sequence, read N- to C-terminus: Glucans biosynthesis protein C (384 aa).

10 helical membrane passes run 17–37, 54–74, 91–111, 140–160, 173–193, 212–232, 240–260, 274–294, 311–331, and 338–358; these read AWLM…THSW, FIHA…SYML, VGIP…ILLQ, LWFL…FTWF, AISL…YAAI, FIVM…LAFI, FTTP…AYLL, TESV…FSLG, ASLF…AYIT, and LIGF…LYEI.

Belongs to the acyltransferase 3 family. OpgC subfamily.

It localises to the cell membrane. It participates in glycan metabolism; osmoregulated periplasmic glucan (OPG) biosynthesis. Functionally, necessary for the succinyl substitution of periplasmic glucans. Could catalyze the transfer of succinyl residues from the cytoplasmic side of the membrane to the nascent glucan backbones on the periplasmic side of the membrane. This is Glucans biosynthesis protein C from Salmonella schwarzengrund (strain CVM19633).